The sequence spans 367 residues: Uroporphyrinogen decarboxylase (367 aa).

M1 is subject to N-acetylmethionine. Residues R37, A39, R41, R50, D86, Y164, S219, and H339 each contribute to the coproporphyrinogen I site. Coproporphyrinogen III contacts are provided by R37, A39, and R41. Coproporphyrinogen III contacts are provided by D86, Y164, S219, and H339.

This sequence belongs to the uroporphyrinogen decarboxylase family. In terms of assembly, homodimer.

Its subcellular location is the cytoplasm. It localises to the cytosol. It carries out the reaction uroporphyrinogen III + 4 H(+) = coproporphyrinogen III + 4 CO2. It catalyses the reaction uroporphyrinogen I + 4 H(+) = coproporphyrinogen I + 4 CO2. The protein operates within porphyrin-containing compound metabolism; protoporphyrin-IX biosynthesis; coproporphyrinogen-III from 5-aminolevulinate: step 4/4. In terms of biological role, catalyzes the sequential decarboxylation of the four acetate side chains of uroporphyrinogen to form coproporphyrinogen and participates in the fifth step in the heme biosynthetic pathway. Isomer I or isomer III of uroporphyrinogen may serve as substrate, but only coproporphyrinogen III can ultimately be converted to heme. In vitro also decarboxylates pentacarboxylate porphyrinogen I. This Homo sapiens (Human) protein is Uroporphyrinogen decarboxylase.